Consider the following 372-residue polypeptide: Actin-related protein 2/3 complex subunit 1B (372 aa).

WD repeat units follow at residues 6-45, 50-89, 94-135, 140-179, 242-280, and 324-367; these read FLVEPISCHAWNKDRTQIAICPNNHEVHIYEKSGAKWTKV, EHNGQVTGIDWAPESNRIVTCGTDRNAYVWTLKGRTWKPT, RINR…WVCK, PIRSTVLSLDWHPNNVLLAAGSCDFKCRIFSAYIKEVEER, SETLPLLALTFITDNSLVAAGHDCFPVLFTYDAAAGMLS, and LHKN…SALK.

Belongs to the WD repeat ARPC1 family. As to quaternary structure, component of the Arp2/3 complex composed of ACTR2/ARP2, ACTR3/ARP3, ARPC1B/p41-ARC, ARPC2/p34-ARC, ARPC3/p21-ARC, ARPC4/p20-ARC and ARPC5/p16-ARC.

Its subcellular location is the cytoplasm. The protein localises to the cytoskeleton. It localises to the nucleus. Component of the Arp2/3 complex, a multiprotein complex that mediates actin polymerization upon stimulation by nucleation-promoting factor (NPF). The Arp2/3 complex mediates the formation of branched actin networks in the cytoplasm, providing the force for cell motility. In addition to its role in the cytoplasmic cytoskeleton, the Arp2/3 complex also promotes actin polymerization in the nucleus, thereby regulating gene transcription and repair of damaged DNA. The Arp2/3 complex promotes homologous recombination (HR) repair in response to DNA damage by promoting nuclear actin polymerization, leading to drive motility of double-strand breaks (DSBs). In Homo sapiens (Human), this protein is Actin-related protein 2/3 complex subunit 1B.